The sequence spans 918 residues: Importin subunit beta-2 (918 aa).

HEAT repeat units follow at residues 11-38, 43-92, 103-137, 145-181, 190-222, 235-263, 275-303, 320-413, 421-449, 461-488, 501-534, 542-577, 583-620, 628-678, 694-725, 777-814, 825-858, and 867-900; these read YVLQ…EAME, QPEF…GGNN, YVKS…TYYR, GLQM…FQLE, EALL…TVIP, FLEI…SFLL, DGIV…FLHA, KDIV…MTNI, IAFP…GAMA, PALI…TLSR, LIPV…IENA, LFYS…AEKC, AMQI…SSLG, PEVY…GLGA, ILKI…YFFN, IDMS…LTHP, DSNW…INLT, and DTIH…SAQI. Residues 361–395 form a disordered region; it reads APRIVKKKEAGNGEDADDNEDDDDDDDDEDGDVDT. Acidic residues predominate over residues 372–393; that stretch reads NGEDADDNEDDDDDDDDEDGDV.

Belongs to the importin beta family. Importin beta-2 subfamily. Interacts with Ran (GSP1); interacts specifically with the GTP-bound form of Ran (GTP-Ran), protecting it from GTP hydrolysis and nucleotide exchange. Interacts with nucleoporins NUP1, NUP100 and NUP116. Interacts with NAB2 and HRP1/NAB4; via their rg-NLS. Interacts with TFG2; via its PY-NLS.

The protein resides in the cytoplasm. It is found in the nucleus. It localises to the nuclear pore complex. In terms of biological role, functions in nuclear protein import as nuclear transport receptor. Serves as receptor for arginine/glycine-rich nuclear localization signals (rg-NLS) and PY-NLS in cargo substrates. Its predominant cargo substrate seems to be mRNA-binding proteins. Required for nuclear transport of NAB2, HRP1/NAB4 and TFG2. Mediates docking of the importin/substrate complex to the nuclear pore complex (NPC) through binding to repeat-containing nucleoporins. The complex is subsequently translocated through the pore by an energy requiring, Ran-dependent mechanism. At the nucleoplasmic side of the NPC, GTP-Ran binding leads to release of the cargo. Efficient GTP-Ran-mediated substrate release requires RNA. The importin is re-exported from the nucleus to the cytoplasm where GTP hydrolysis releases Ran from importin. The directionality of nuclear import is thought to be conferred by an asymmetric distribution of the GTP- and GDP-bound forms of Ran between the cytoplasm and nucleus. The sequence is that of Importin subunit beta-2 from Saccharomyces cerevisiae (strain ATCC 204508 / S288c) (Baker's yeast).